Reading from the N-terminus, the 98-residue chain is Large ribosomal subunit protein uL23 (98 aa).

Belongs to the universal ribosomal protein uL23 family. In terms of assembly, part of the 50S ribosomal subunit. Contacts protein L29, and trigger factor when it is bound to the ribosome.

Functionally, one of the early assembly proteins it binds 23S rRNA. One of the proteins that surrounds the polypeptide exit tunnel on the outside of the ribosome. Forms the main docking site for trigger factor binding to the ribosome. In Jannaschia sp. (strain CCS1), this protein is Large ribosomal subunit protein uL23.